The sequence spans 398 residues: Phosphoglycerate kinase (398 aa).

Substrate is bound by residues 21–23 (DFN), arginine 36, 59–62 (HLGR), arginine 119, and arginine 157. ATP-binding positions include lysine 208, glycine 296, glutamate 327, and 354-357 (GGDS).

Belongs to the phosphoglycerate kinase family. In terms of assembly, monomer.

The protein localises to the cytoplasm. The enzyme catalyses (2R)-3-phosphoglycerate + ATP = (2R)-3-phospho-glyceroyl phosphate + ADP. It functions in the pathway carbohydrate degradation; glycolysis; pyruvate from D-glyceraldehyde 3-phosphate: step 2/5. The protein is Phosphoglycerate kinase of Streptococcus mutans serotype c (strain ATCC 700610 / UA159).